The primary structure comprises 594 residues: Aspartate--tRNA(Asp/Asn) ligase (594 aa).

Residue Glu-175 coordinates L-aspartate. Residues 199-202 (QQLK) form an aspartate region. Position 221 (Arg-221) interacts with L-aspartate. ATP is bound by residues 221–223 (RDE) and Gln-230. Position 450 (His-450) interacts with L-aspartate. Glu-485 lines the ATP pocket. Arg-492 lines the L-aspartate pocket. 537-540 (GIDR) serves as a coordination point for ATP.

Belongs to the class-II aminoacyl-tRNA synthetase family. Type 1 subfamily. As to quaternary structure, homodimer.

The protein localises to the cytoplasm. The catalysed reaction is tRNA(Asx) + L-aspartate + ATP = L-aspartyl-tRNA(Asx) + AMP + diphosphate. Functionally, aspartyl-tRNA synthetase with relaxed tRNA specificity since it is able to aspartylate not only its cognate tRNA(Asp) but also tRNA(Asn). Reaction proceeds in two steps: L-aspartate is first activated by ATP to form Asp-AMP and then transferred to the acceptor end of tRNA(Asp/Asn). The chain is Aspartate--tRNA(Asp/Asn) ligase from Herpetosiphon aurantiacus (strain ATCC 23779 / DSM 785 / 114-95).